The sequence spans 254 residues: Thiazole synthase (254 aa).

The active-site Schiff-base intermediate with DXP is the Lys93. 1-deoxy-D-xylulose 5-phosphate is bound by residues Gly154, 181 to 182, and 203 to 204; these read AG and NT.

This sequence belongs to the ThiG family. As to quaternary structure, homotetramer. Forms heterodimers with either ThiH or ThiS.

The protein localises to the cytoplasm. It catalyses the reaction [ThiS sulfur-carrier protein]-C-terminal-Gly-aminoethanethioate + 2-iminoacetate + 1-deoxy-D-xylulose 5-phosphate = [ThiS sulfur-carrier protein]-C-terminal Gly-Gly + 2-[(2R,5Z)-2-carboxy-4-methylthiazol-5(2H)-ylidene]ethyl phosphate + 2 H2O + H(+). Its pathway is cofactor biosynthesis; thiamine diphosphate biosynthesis. Functionally, catalyzes the rearrangement of 1-deoxy-D-xylulose 5-phosphate (DXP) to produce the thiazole phosphate moiety of thiamine. Sulfur is provided by the thiocarboxylate moiety of the carrier protein ThiS. In vitro, sulfur can be provided by H(2)S. This Ruegeria pomeroyi (strain ATCC 700808 / DSM 15171 / DSS-3) (Silicibacter pomeroyi) protein is Thiazole synthase.